A 363-amino-acid polypeptide reads, in one-letter code: Cytochrome P450 CYP82D47 (363 aa).

Cys-342 contacts heme.

It belongs to the cytochrome P450 family. Heme is required as a cofactor.

Functionally, probable heme-thiolate monooxygenase. The chain is Cytochrome P450 CYP82D47 from Panax ginseng (Korean ginseng).